Reading from the N-terminus, the 380-residue chain is High affinity transport system protein p37 (380 aa).

A signal peptide spans 1–26 (MLKRKKLLQGFLKFLPLIIPATIFVS). A lipid anchor (N-palmitoyl cysteine) is attached at Cys27. Cys27 is lipidated: S-diacylglycerol cysteine. The interval 285 to 304 (NHFYTPTENNGKGDSEKSNN) is disordered.

Its subcellular location is the cell membrane. Its function is as follows. P37 is part of a high-affinity transport system. This Mycoplasma pneumoniae (strain ATCC 29342 / M129 / Subtype 1) (Mycoplasmoides pneumoniae) protein is High affinity transport system protein p37 (p37).